Reading from the N-terminus, the 193-residue chain is Putative deoxynucleotide monophosphate kinase (193 aa).

Lysine 10 lines the dGMP pocket. ATP is bound by residues glycine 13 and threonine 16. DGMP contacts are provided by leucine 36, lysine 37, lysine 58, aspartate 122, arginine 124, glutamate 128, and serine 155.

The protein belongs to the dNMP kinase family.

It catalyses the reaction a 2'-deoxyribonucleoside 5'-phosphate + ATP = a 2'-deoxyribonucleoside 5'-diphosphate + ADP. In Acanthamoeba polyphaga mimivirus (APMV), this protein is Putative deoxynucleotide monophosphate kinase.